The primary structure comprises 252 residues: Phosphomannomutase (252 aa).

D13 acts as the Nucleophile in catalysis. The Mg(2+) site is built by D13 and D15. Catalysis depends on D15, which acts as the Proton donor/acceptor. Positions 22, 124, 135, 142, 180, and 182 each coordinate alpha-D-mannose 1-phosphate. 3 residues coordinate Mg(2+): D208, Y220, and T225.

The protein belongs to the eukaryotic PMM family. As to quaternary structure, homodimer. Mg(2+) is required as a cofactor.

The protein localises to the cytoplasm. It catalyses the reaction alpha-D-mannose 1-phosphate = D-mannose 6-phosphate. The protein operates within nucleotide-sugar biosynthesis; GDP-alpha-D-mannose biosynthesis; alpha-D-mannose 1-phosphate from D-fructose 6-phosphate: step 2/2. Its function is as follows. Catalyzes the interconversion of mannose-6-phosphate to mannose-1-phosphate, the precursor for the synthesis of GDP-mannose. GDP-mannose is an essential sugar nucleotide for the synthesis of D-mannose-containing cell wall polysaccharides (galactomannans and glucomannans), glycolipids, glycoproteins and the antioxidant L-ascorbate. Can complement the yeast temperature-sensitive mutant sec53-6. The chain is Phosphomannomutase from Solanum lycopersicum (Tomato).